The following is a 200-amino-acid chain: 3-isopropylmalate dehydratase small subunit (200 aa).

Belongs to the LeuD family. LeuD type 1 subfamily. As to quaternary structure, heterodimer of LeuC and LeuD.

It carries out the reaction (2R,3S)-3-isopropylmalate = (2S)-2-isopropylmalate. It participates in amino-acid biosynthesis; L-leucine biosynthesis; L-leucine from 3-methyl-2-oxobutanoate: step 2/4. Catalyzes the isomerization between 2-isopropylmalate and 3-isopropylmalate, via the formation of 2-isopropylmaleate. The polypeptide is 3-isopropylmalate dehydratase small subunit (Campylobacter jejuni subsp. jejuni serotype O:6 (strain 81116 / NCTC 11828)).